Reading from the N-terminus, the 405-residue chain is MKRTFIMMLDSFGIGAAADAEAFGDTGSDTFGNIAKACAEGKANEGREGPLKLPNLARLGLAQASKESTGQLPAGFSDDVEIIGAYGHADELSTGKDTPSGHWELAGVPVLYEWGYFSDHTNSFPKELTDKILARAGLSDYLGNCHASGTAILEELGNEHMTSGLPIFYTSADSVFQVACHEETFGLENLYTLCQIVREELEPYNIGRVIARPFVGTGPSDFARTGNRRDYAVEPPAKTVLDKLKDSGGEVVSVGKIADIYAHCGITKKIKASGLEALFDATLEELKVAGDNTIVFTNFVDFDSHFGHRRDVAGYARSLEYFDSRLPELMALMGEDDLLLLTADHGCDPTWPGTDHTRERVPVLAYGAGLEAGSLGRRKSFADMGQSIASYFKLEPMEYGESFIK.

Positions 10, 303, 308, 344, 345, and 356 each coordinate Mn(2+).

The protein belongs to the phosphopentomutase family. Mn(2+) serves as cofactor.

It localises to the cytoplasm. It catalyses the reaction 2-deoxy-alpha-D-ribose 1-phosphate = 2-deoxy-D-ribose 5-phosphate. The catalysed reaction is alpha-D-ribose 1-phosphate = D-ribose 5-phosphate. Its pathway is carbohydrate degradation; 2-deoxy-D-ribose 1-phosphate degradation; D-glyceraldehyde 3-phosphate and acetaldehyde from 2-deoxy-alpha-D-ribose 1-phosphate: step 1/2. Functionally, isomerase that catalyzes the conversion of deoxy-ribose 1-phosphate (dRib-1-P) and ribose 1-phosphate (Rib-1-P) to deoxy-ribose 5-phosphate (dRib-5-P) and ribose 5-phosphate (Rib-5-P), respectively. This Shewanella sediminis (strain HAW-EB3) protein is Phosphopentomutase.